The chain runs to 421 residues: MDKIVIKGGNKLTGEVKVEGAKNAVLPILTASLLASDKPSKLVNVPALSDVETINNVLTTLNADVTYKKDENAVVVDATKTLNEEAPYEYVSKMRASILVMGPLLARLGHAIVALPGGCAIGSRPIEQHIKGFEALGAEIHLENGNIYANAKDGLKGTSIHLDFPSVGATQNIIMAASLAKGKTLIENAAKEPEIVDLANYINEMGGRITGAGTDTITINGVESLHGVEHAIIPDRIEAGTLLIAGAITRGDIFVRGAIKEHMASLVYKLEEMGVELEYQEDGIRVRAEGDLQPVDIKTLPHPGFPTDMQSQMMALLLTANGHKVVTETVFENRFMHVAEFKRMNANINVEGRSAKLEGKSQLQGAQVKATDLRAAAALILAGLVADGKTSVTELTHLDRGYVDLHGKLKQLGADIERIND.

22–23 (KN) contacts phosphoenolpyruvate. Residue Arg95 coordinates UDP-N-acetyl-alpha-D-glucosamine. Cys119 acts as the Proton donor in catalysis. Cys119 is subject to 2-(S-cysteinyl)pyruvic acid O-phosphothioketal. Residues 124–128 (RPIEQ), Asp308, and Val330 contribute to the UDP-N-acetyl-alpha-D-glucosamine site.

This sequence belongs to the EPSP synthase family. MurA subfamily.

It is found in the cytoplasm. The catalysed reaction is phosphoenolpyruvate + UDP-N-acetyl-alpha-D-glucosamine = UDP-N-acetyl-3-O-(1-carboxyvinyl)-alpha-D-glucosamine + phosphate. The protein operates within cell wall biogenesis; peptidoglycan biosynthesis. In terms of biological role, cell wall formation. Adds enolpyruvyl to UDP-N-acetylglucosamine. The polypeptide is UDP-N-acetylglucosamine 1-carboxyvinyltransferase 1 (Staphylococcus aureus (strain MRSA252)).